The following is a 201-amino-acid chain: Nucleoid occlusion factor SlmA (201 aa).

The region spanning lysine 14 to leucine 75 is the HTH tetR-type domain. The segment at residues threonine 38–phenylalanine 57 is a DNA-binding region (H-T-H motif).

This sequence belongs to the nucleoid occlusion factor SlmA family. In terms of assembly, homodimer. Interacts with FtsZ.

It is found in the cytoplasm. The protein localises to the nucleoid. In terms of biological role, required for nucleoid occlusion (NO) phenomenon, which prevents Z-ring formation and cell division over the nucleoid. Acts as a DNA-associated cell division inhibitor that binds simultaneously chromosomal DNA and FtsZ, and disrupts the assembly of FtsZ polymers. SlmA-DNA-binding sequences (SBS) are dispersed on non-Ter regions of the chromosome, preventing FtsZ polymerization at these regions. The polypeptide is Nucleoid occlusion factor SlmA (Glaesserella parasuis serovar 5 (strain SH0165) (Haemophilus parasuis)).